A 306-amino-acid chain; its full sequence is Light-independent protochlorophyllide reductase iron-sulfur ATP-binding protein (306 aa).

The interval 1 to 31 is disordered; that stretch reads MREAAGLEARGLKSPPILKGQDGEGSLQVHQ. Residues 50–55 and Lys79 contribute to the ATP site; that span reads GIGKST. Ser54 is a binding site for Mg(2+). Residues Cys135 and Cys169 each contribute to the [4Fe-4S] cluster site. Position 220–221 (220–221) interacts with ATP; sequence NR.

This sequence belongs to the NifH/BchL/ChlL family. As to quaternary structure, homodimer. Protochlorophyllide reductase is composed of three subunits; BchL, BchN and BchB. [4Fe-4S] cluster serves as cofactor.

The enzyme catalyses chlorophyllide a + oxidized 2[4Fe-4S]-[ferredoxin] + 2 ADP + 2 phosphate = protochlorophyllide a + reduced 2[4Fe-4S]-[ferredoxin] + 2 ATP + 2 H2O. It functions in the pathway porphyrin-containing compound metabolism; bacteriochlorophyll biosynthesis (light-independent). Functionally, component of the dark-operative protochlorophyllide reductase (DPOR) that uses Mg-ATP and reduced ferredoxin to reduce ring D of protochlorophyllide (Pchlide) to form chlorophyllide a (Chlide). This reaction is light-independent. The L component serves as a unique electron donor to the NB-component of the complex, and binds Mg-ATP. The polypeptide is Light-independent protochlorophyllide reductase iron-sulfur ATP-binding protein (Jannaschia sp. (strain CCS1)).